Consider the following 383-residue polypeptide: Neuropeptide Y receptor type 1 (383 aa).

The Extracellular portion of the chain corresponds to 1–44 (MNSTSFSQVENHSIYYNFSEKNSRFLAFENDDCHLPLAMIFTLA). Residues Asn-2, Asn-11, and Asn-17 are each glycosylated (N-linked (GlcNAc...) asparagine). Residues 45–65 (LAYGAVIILGVSGNLALIIII) traverse the membrane as a helical segment. Residues 66-76 (LKQKEMRNVTN) lie on the Cytoplasmic side of the membrane. A helical transmembrane segment spans residues 77–97 (ILIVNLSFSDLLVAIMCLPFT). Over 98–116 (FVYTLMDHWVFGEAMCKLN) the chain is Extracellular. A disulfide bridge connects residues Cys-113 and Cys-198. The helical transmembrane segment at 117–137 (PFVQCVSITVSIFSLVLIAVE) threads the bilayer. At 138-154 (RHQLIINPRGWRPNNRH) the chain is on the cytoplasmic side. Residues 155 to 175 (AYVGIAVIWVLAVASSLPFLI) traverse the membrane as a helical segment. The Extracellular portion of the chain corresponds to 176–211 (YQVLTDEPFQNVTLDAFKDKYVCFDKFPSDSHRLSY). Asn-186 is a glycosylation site (N-linked (GlcNAc...) asparagine). A helical membrane pass occupies residues 212–232 (TTLLLVLQYFGPLCFIFICYF). The Cytoplasmic segment spans residues 233 to 260 (KIYVRLKRRNSMMDKMRDNKYRSSEAKR). Residues 261–281 (INIMLLSIVVAFAVCWLPLTI) form a helical membrane-spanning segment. The Extracellular segment spans residues 282 to 299 (FNTVFDWDHQIIATCNHN). A helical transmembrane segment spans residues 300-320 (LLFLLCHLTAMISTCVNPIFY). At 321–383 (GFLNKNFQRD…KIHTDDNEKI (63 aa)) the chain is on the cytoplasmic side. Cys-338 is lipidated: S-palmitoyl cysteine. Ser-368 carries the phosphoserine modification.

The protein belongs to the G-protein coupled receptor 1 family.

Its subcellular location is the cell membrane. Functionally, receptor for neuropeptide Y and peptide YY. This chain is Neuropeptide Y receptor type 1 (NPY1R), found in Bos taurus (Bovine).